We begin with the raw amino-acid sequence, 396 residues long: Arginine biosynthesis bifunctional protein ArgJ (396 aa).

The substrate site is built by Thr150, Lys177, Thr188, Glu267, Asn391, and Thr396. Residue Thr188 is the Nucleophile of the active site.

This sequence belongs to the ArgJ family. In terms of assembly, heterotetramer of two alpha and two beta chains.

Its subcellular location is the cytoplasm. It catalyses the reaction N(2)-acetyl-L-ornithine + L-glutamate = N-acetyl-L-glutamate + L-ornithine. The enzyme catalyses L-glutamate + acetyl-CoA = N-acetyl-L-glutamate + CoA + H(+). The protein operates within amino-acid biosynthesis; L-arginine biosynthesis; L-ornithine and N-acetyl-L-glutamate from L-glutamate and N(2)-acetyl-L-ornithine (cyclic): step 1/1. It functions in the pathway amino-acid biosynthesis; L-arginine biosynthesis; N(2)-acetyl-L-ornithine from L-glutamate: step 1/4. Its function is as follows. Catalyzes two activities which are involved in the cyclic version of arginine biosynthesis: the synthesis of N-acetylglutamate from glutamate and acetyl-CoA as the acetyl donor, and of ornithine by transacetylation between N(2)-acetylornithine and glutamate. The protein is Arginine biosynthesis bifunctional protein ArgJ of Wolinella succinogenes (strain ATCC 29543 / DSM 1740 / CCUG 13145 / JCM 31913 / LMG 7466 / NCTC 11488 / FDC 602W) (Vibrio succinogenes).